Here is a 108-residue protein sequence, read N- to C-terminus: Mitochondrial pyruvate carrier 4 (108 aa).

3 helical membrane-spanning segments follow: residues 19–35 (IHFW…IANI), 51–67 (IAVT…SMVI), and 74–90 (LFSV…YQLA).

The protein belongs to the mitochondrial pyruvate carrier (MPC) (TC 2.A.105) family.

The protein localises to the mitochondrion inner membrane. Its function is as follows. Mediates the uptake of pyruvate into mitochondria. The protein is Mitochondrial pyruvate carrier 4 of Arabidopsis thaliana (Mouse-ear cress).